Reading from the N-terminus, the 273-residue chain is Putative phosphoenolpyruvate synthase regulatory protein (273 aa).

Position 153 to 160 (153 to 160) interacts with ADP; the sequence is AVSRAGKT.

This sequence belongs to the pyruvate, phosphate/water dikinase regulatory protein family. PSRP subfamily.

The enzyme catalyses [pyruvate, water dikinase] + ADP = [pyruvate, water dikinase]-phosphate + AMP + H(+). It catalyses the reaction [pyruvate, water dikinase]-phosphate + phosphate + H(+) = [pyruvate, water dikinase] + diphosphate. In terms of biological role, bifunctional serine/threonine kinase and phosphorylase involved in the regulation of the phosphoenolpyruvate synthase (PEPS) by catalyzing its phosphorylation/dephosphorylation. The chain is Putative phosphoenolpyruvate synthase regulatory protein from Xanthomonas campestris pv. campestris (strain ATCC 33913 / DSM 3586 / NCPPB 528 / LMG 568 / P 25).